A 175-amino-acid chain; its full sequence is NADH-ubiquinone oxidoreductase chain 6 (175 aa).

A run of 5 helical transmembrane segments spans residues Met-1 to Ser-21, Ser-25 to Met-45, Phe-47 to Val-67, Val-88 to Leu-108, and Tyr-149 to Leu-169.

This sequence belongs to the complex I subunit 6 family.

It localises to the mitochondrion membrane. The catalysed reaction is a ubiquinone + NADH + 5 H(+)(in) = a ubiquinol + NAD(+) + 4 H(+)(out). Its function is as follows. Core subunit of the mitochondrial membrane respiratory chain NADH dehydrogenase (Complex I) that is believed to belong to the minimal assembly required for catalysis. Complex I functions in the transfer of electrons from NADH to the respiratory chain. The immediate electron acceptor for the enzyme is believed to be ubiquinone. This Rhinolophus monoceros (Formosan lesser horseshoe bat) protein is NADH-ubiquinone oxidoreductase chain 6 (MT-ND6).